Consider the following 144-residue polypeptide: Large ribosomal subunit protein uL13 (144 aa).

This sequence belongs to the universal ribosomal protein uL13 family. Part of the 50S ribosomal subunit.

Functionally, this protein is one of the early assembly proteins of the 50S ribosomal subunit, although it is not seen to bind rRNA by itself. It is important during the early stages of 50S assembly. This is Large ribosomal subunit protein uL13 from Mycoplasmopsis pulmonis (strain UAB CTIP) (Mycoplasma pulmonis).